A 232-amino-acid chain; its full sequence is Cytidylate kinase (232 aa).

19–27 (GPAGVGKTT) is an ATP binding site.

This sequence belongs to the cytidylate kinase family. Type 1 subfamily.

It is found in the cytoplasm. The catalysed reaction is CMP + ATP = CDP + ADP. It catalyses the reaction dCMP + ATP = dCDP + ADP. The protein is Cytidylate kinase of Nitratidesulfovibrio vulgaris (strain DP4) (Desulfovibrio vulgaris).